The sequence spans 251 residues: Imidazole glycerol phosphate synthase subunit HisF (251 aa).

Residues aspartate 11 and aspartate 130 contribute to the active site.

It belongs to the HisA/HisF family. Heterodimer of HisH and HisF.

Its subcellular location is the cytoplasm. The enzyme catalyses 5-[(5-phospho-1-deoxy-D-ribulos-1-ylimino)methylamino]-1-(5-phospho-beta-D-ribosyl)imidazole-4-carboxamide + L-glutamine = D-erythro-1-(imidazol-4-yl)glycerol 3-phosphate + 5-amino-1-(5-phospho-beta-D-ribosyl)imidazole-4-carboxamide + L-glutamate + H(+). Its pathway is amino-acid biosynthesis; L-histidine biosynthesis; L-histidine from 5-phospho-alpha-D-ribose 1-diphosphate: step 5/9. In terms of biological role, IGPS catalyzes the conversion of PRFAR and glutamine to IGP, AICAR and glutamate. The HisF subunit catalyzes the cyclization activity that produces IGP and AICAR from PRFAR using the ammonia provided by the HisH subunit. This Chloroherpeton thalassium (strain ATCC 35110 / GB-78) protein is Imidazole glycerol phosphate synthase subunit HisF.